The chain runs to 342 residues: Foldase protein PrsA (342 aa).

Residues 1-22 (MVSVKKIVASALVGVLMFSAVG) form the signal peptide. A lipid anchor (N-palmitoyl cysteine) is attached at Cys23. Cys23 is lipidated: S-diacylglycerol cysteine. The PpiC domain occupies 190-284 (AKGVLARHLL…FGYHIIQAGA (95 aa)).

It belongs to the PrsA family.

It localises to the cell membrane. The catalysed reaction is [protein]-peptidylproline (omega=180) = [protein]-peptidylproline (omega=0). Plays a major role in protein secretion by helping the post-translocational extracellular folding of several secreted proteins. In Clostridium perfringens (strain SM101 / Type A), this protein is Foldase protein PrsA.